The primary structure comprises 391 residues: Serpin B13 (391 aa).

This sequence belongs to the serpin family. Ov-serpin subfamily. As to expression, skin specific.

The protein localises to the cytoplasm. May play a role in the proliferation or differentiation of keratinocytes. This chain is Serpin B13 (SERPINB13), found in Homo sapiens (Human).